Consider the following 471-residue polypeptide: Ribulose bisphosphate carboxylase large chain (471 aa).

2 residues coordinate substrate: Asn119 and Thr169. The active-site Proton acceptor is Lys171. Residue Lys173 coordinates substrate. Residues Lys197, Asp199, and Glu200 each contribute to the Mg(2+) site. At Lys197 the chain carries N6-carboxylysine. The active-site Proton acceptor is His290. Substrate is bound by residues Arg291, His323, and Ser375.

Belongs to the RuBisCO large chain family. Type I subfamily. Heterohexadecamer of 8 large chains and 8 small chains; disulfide-linked. The disulfide link is formed within the large subunit homodimers. Requires Mg(2+) as cofactor. Post-translationally, the disulfide bond which can form in the large chain dimeric partners within the hexadecamer appears to be associated with oxidative stress and protein turnover.

The protein resides in the carboxysome. The catalysed reaction is 2 (2R)-3-phosphoglycerate + 2 H(+) = D-ribulose 1,5-bisphosphate + CO2 + H2O. It carries out the reaction D-ribulose 1,5-bisphosphate + O2 = 2-phosphoglycolate + (2R)-3-phosphoglycerate + 2 H(+). Functionally, ruBisCO catalyzes two reactions: the carboxylation of D-ribulose 1,5-bisphosphate, the primary event in carbon dioxide fixation, as well as the oxidative fragmentation of the pentose substrate in the photorespiration process. Both reactions occur simultaneously and in competition at the same active site. This Crocosphaera subtropica (strain ATCC 51142 / BH68) (Cyanothece sp. (strain ATCC 51142)) protein is Ribulose bisphosphate carboxylase large chain.